We begin with the raw amino-acid sequence, 943 residues long: Leucine--tRNA ligase (943 aa).

Positions 40 to 51 (PYPSGAGLHVGH) match the 'HIGH' region motif. Positions 717–721 (KMSKS) match the 'KMSKS' region motif. An ATP-binding site is contributed by Lys-720.

Belongs to the class-I aminoacyl-tRNA synthetase family.

The protein localises to the cytoplasm. The catalysed reaction is tRNA(Leu) + L-leucine + ATP = L-leucyl-tRNA(Leu) + AMP + diphosphate. The sequence is that of Leucine--tRNA ligase from Bacteroides fragilis (strain ATCC 25285 / DSM 2151 / CCUG 4856 / JCM 11019 / LMG 10263 / NCTC 9343 / Onslow / VPI 2553 / EN-2).